A 367-amino-acid chain; its full sequence is 2-aminoethylphosphonate--pyruvate transaminase (367 aa).

Lysine 193 carries the N6-(pyridoxal phosphate)lysine modification.

Belongs to the class-V pyridoxal-phosphate-dependent aminotransferase family. PhnW subfamily. As to quaternary structure, homodimer. The cofactor is pyridoxal 5'-phosphate.

The enzyme catalyses (2-aminoethyl)phosphonate + pyruvate = phosphonoacetaldehyde + L-alanine. Involved in phosphonate degradation. The polypeptide is 2-aminoethylphosphonate--pyruvate transaminase (Vibrio parahaemolyticus serotype O3:K6 (strain RIMD 2210633)).